A 283-amino-acid chain; its full sequence is Bis(5'-nucleosyl)-tetraphosphatase, symmetrical (283 aa).

The protein belongs to the Ap4A hydrolase family.

It catalyses the reaction P(1),P(4)-bis(5'-adenosyl) tetraphosphate + H2O = 2 ADP + 2 H(+). Hydrolyzes diadenosine 5',5'''-P1,P4-tetraphosphate to yield ADP. In Pseudomonas paraeruginosa (strain DSM 24068 / PA7) (Pseudomonas aeruginosa (strain PA7)), this protein is Bis(5'-nucleosyl)-tetraphosphatase, symmetrical.